The sequence spans 388 residues: Dual-specificity RNA methyltransferase RlmN (388 aa).

Glu109 (proton acceptor) is an active-site residue. The region spanning 115-354 is the Radical SAM core domain; sequence EDDRATLCVS…TIVRKTRGDD (240 aa). Cys122 and Cys359 form a disulfide bridge. [4Fe-4S] cluster is bound by residues Cys129, Cys133, and Cys136. S-adenosyl-L-methionine-binding positions include 183–184, Ser215, 237–239, and Asn316; these read GE and SLH. The S-methylcysteine intermediate role is filled by Cys359.

This sequence belongs to the radical SAM superfamily. RlmN family. Requires [4Fe-4S] cluster as cofactor.

It localises to the cytoplasm. The catalysed reaction is adenosine(2503) in 23S rRNA + 2 reduced [2Fe-2S]-[ferredoxin] + 2 S-adenosyl-L-methionine = 2-methyladenosine(2503) in 23S rRNA + 5'-deoxyadenosine + L-methionine + 2 oxidized [2Fe-2S]-[ferredoxin] + S-adenosyl-L-homocysteine. It carries out the reaction adenosine(37) in tRNA + 2 reduced [2Fe-2S]-[ferredoxin] + 2 S-adenosyl-L-methionine = 2-methyladenosine(37) in tRNA + 5'-deoxyadenosine + L-methionine + 2 oxidized [2Fe-2S]-[ferredoxin] + S-adenosyl-L-homocysteine. In terms of biological role, specifically methylates position 2 of adenine 2503 in 23S rRNA and position 2 of adenine 37 in tRNAs. m2A2503 modification seems to play a crucial role in the proofreading step occurring at the peptidyl transferase center and thus would serve to optimize ribosomal fidelity. This chain is Dual-specificity RNA methyltransferase RlmN, found in Citrobacter koseri (strain ATCC BAA-895 / CDC 4225-83 / SGSC4696).